The following is a 151-amino-acid chain: uncharacterized protein (151 aa).

2 BON domains span residues 2 to 68 (DDAA…AVDK) and 78 to 146 (IDSA…RLKH).

This is an uncharacterized protein from Anaplasma centrale.